Consider the following 410-residue polypeptide: Protein ea47 (410 aa).

The sequence is that of Protein ea47 (ea47) from Escherichia coli (Bacteriophage lambda).